A 124-amino-acid chain; its full sequence is MRHYEIVFIVHPDQSEQVPAMIERYKQLVTSQNGQIHRVEDWGRRQMAYMIQKLAKAHYVCLNIECGKDTLAELEHAFKFNDAVLRHLIVQTKKAETAPSPMMKEVQREEARKAAQTTTEGQPA.

Positions 96–124 (ETAPSPMMKEVQREEARKAAQTTTEGQPA) are disordered. The segment covering 115-124 (AQTTTEGQPA) has biased composition (polar residues).

The protein belongs to the bacterial ribosomal protein bS6 family.

Functionally, binds together with bS18 to 16S ribosomal RNA. The polypeptide is Small ribosomal subunit protein bS6 (Cupriavidus metallidurans (strain ATCC 43123 / DSM 2839 / NBRC 102507 / CH34) (Ralstonia metallidurans)).